A 200-amino-acid chain; its full sequence is MIILENEANEPGFRIQQRAESETGKKGRFGGILKENPIKGFSSETLTRPLTGLFRKTGKSQRKTDDDDSQETIAAPPTNFPNMARISATIESVQINDEYAGYRDRNPETGSKLTLNEGAGVFGNAMHPLTRYFKVGDVDVSILGRSFPTEKTVDEEGPWTAQSLFNSLESRIKKERIDAKDQPSDSRSRNARETLISSKY.

Disordered regions lie at residues 56–76 (KTGK…IAAP) and 175–200 (ERID…SSKY). A compositionally biased stretch (basic and acidic residues) spans 175-192 (ERIDAKDQPSDSRSRNAR).

The protein belongs to the IFT43 family. In terms of assembly, component of the IFT complex A (IFT-A) composed of at least che-11, daf-10, dyf-2, ift-139, ift-43 and ifta-1. Expressed in ciliated sensory neurons.

It localises to the cell projection. The protein resides in the cilium. In terms of biological role, as a component of IFT complex A (IFT-A), a complex required for retrograde ciliary transport and entry into cilia of G protein-coupled receptors (GPCRs), it is involved in ciliogenesis. In particular, may act redundantly with the intraflagellar transport protein ift-139 to regulate the transport of specific ciliary cargo proteins such as che-3 which are related to motility. This chain is Intraflagellar transport protein 43 homolog, found in Caenorhabditis elegans.